We begin with the raw amino-acid sequence, 682 residues long: Two-component system protein A (682 aa).

A disordered region spans residues 11–41 (SLDDNDNGQQHQDEVQAKHQDQGHTCPSRPS). Residues 21–32 (HQDEVQAKHQDQ) are compositionally biased toward basic and acidic residues. PAS domains are found at residues 45–105 (LSRI…PILY) and 166–239 (MNET…LREG). One can recognise a PAC domain in the interval 241–292 (IEDEGWRYRRDGSRFWANVLITPIYQFGQHVGFVKVTRDLTERKEAEACMIA). The Histidine kinase domain occupies 307–530 (NISHEIRTPM…VFWFTAKMGG (224 aa)). Phosphohistidine; by autocatalysis is present on His-310. The 118-residue stretch at 563–680 (HVLLVEDNIV…QLLRVLWKWF (118 aa)) folds into the Response regulatory domain. Asp-615 is modified (4-aspartylphosphate).

In terms of processing, activation probably requires a transfer of a phosphate group between a His in the histidine kinase domain and an Asp of the response regulatory domain.

Its subcellular location is the cytoplasm. The catalysed reaction is ATP + protein L-histidine = ADP + protein N-phospho-L-histidine.. Its function is as follows. May be part of a two-component regulatory system required for formation of conidia on certain growth media. This is Two-component system protein A from Emericella nidulans (strain FGSC A4 / ATCC 38163 / CBS 112.46 / NRRL 194 / M139) (Aspergillus nidulans).